We begin with the raw amino-acid sequence, 183 residues long: NADH-quinone oxidoreductase subunit B 2 (183 aa).

Positions 47, 48, 113, and 142 each coordinate [4Fe-4S] cluster.

Belongs to the complex I 20 kDa subunit family. NDH-1 is composed of 14 different subunits. Subunits NuoB, C, D, E, F, and G constitute the peripheral sector of the complex. [4Fe-4S] cluster serves as cofactor.

The protein localises to the cell inner membrane. It catalyses the reaction a quinone + NADH + 5 H(+)(in) = a quinol + NAD(+) + 4 H(+)(out). Its function is as follows. NDH-1 shuttles electrons from NADH, via FMN and iron-sulfur (Fe-S) centers, to quinones in the respiratory chain. The immediate electron acceptor for the enzyme in this species is believed to be ubiquinone. Couples the redox reaction to proton translocation (for every two electrons transferred, four hydrogen ions are translocated across the cytoplasmic membrane), and thus conserves the redox energy in a proton gradient. The protein is NADH-quinone oxidoreductase subunit B 2 of Anaeromyxobacter sp. (strain Fw109-5).